The primary structure comprises 690 residues: Quinohemoprotein alcohol dehydrogenase ADH IIB (690 aa).

The signal sequence occupies residues 1–22 (MKKPLRTSLLMLCLATPLAALA). E81 contributes to the pyrroloquinoline quinone binding site. A disulfide bridge links C127 with C128. Residues R133, T177, and 193-194 (GA) contribute to the pyrroloquinoline quinone site. Position 195 (E195) interacts with Ca(2+). Residue T252 coordinates pyrroloquinoline quinone. Positions 272 and 317 each coordinate Ca(2+). The Proton acceptor role is filled by D317. Residues K344, 404-405 (NW), and V547 contribute to the pyrroloquinoline quinone site. A Cytochrome c domain is found at 600–678 (EQVQAGKQLY…QIKLYVMSRE (79 aa)). Heme c-binding residues include C613, C616, H617, and M655.

The protein belongs to the bacterial PQQ dehydrogenase family. In terms of assembly, monomer. The cofactor is pyrroloquinoline quinone. Requires Ca(2+) as cofactor. Heme c is required as a cofactor.

It localises to the periplasm. It catalyses the reaction 2 oxidized [azurin] + a primary alcohol = 2 reduced [azurin] + an aldehyde + 2 H(+). With respect to regulation, inhibited by 10 mM 1-butanol. Its function is as follows. Catalyzes the dye-linked oxidation of primary alcohols to the corresponding aldehydes and the (subsequent) oxidation of the aldehydes to carboxylic acids. Exhibits activity with longer mono-alcohols (C-4 to C-7) but not with methanol or glycerol. Reacts with 1,2-propanediol and 1,3-propanediol but not with sugar alcohols such as D-sorbitol. This chain is Quinohemoprotein alcohol dehydrogenase ADH IIB, found in Pseudomonas putida (Arthrobacter siderocapsulatus).